The chain runs to 750 residues: Photosystem I P700 chlorophyll a apoprotein A1 (750 aa).

A run of 8 helical transmembrane segments spans residues 70–93, 156–179, 195–219, 291–309, 346–369, 385–411, 433–455, and 531–549; these read VFSA…FHGA, LYCT…FHYH, LNHH…HVSL, IAHH…GHMY, WHAQ…HHMY, LSLF…IFMV, AIIS…LYIH, and FLVH…LILL. The [4Fe-4S] cluster site is built by Cys-573 and Cys-582. 2 helical membrane-spanning segments follow: residues 589–610 and 664–686; these read HVFL…HFSW and LSAY…MFLF. His-675 provides a ligand contact to chlorophyll a'. 2 residues coordinate chlorophyll a: Met-683 and Tyr-691. Residue Trp-692 coordinates phylloquinone. Residues 724–744 form a helical membrane-spanning segment; it reads AVGVTHYLLGGIATTWAFFLA.

The protein belongs to the PsaA/PsaB family. As to quaternary structure, the PsaA/B heterodimer binds the P700 chlorophyll special pair and subsequent electron acceptors. PSI consists of a core antenna complex that captures photons, and an electron transfer chain that converts photonic excitation into a charge separation. The eukaryotic PSI reaction center is composed of at least 11 subunits. It depends on P700 is a chlorophyll a/chlorophyll a' dimer, A0 is one or more chlorophyll a, A1 is one or both phylloquinones and FX is a shared 4Fe-4S iron-sulfur center. as a cofactor.

The protein localises to the plastid. The protein resides in the chloroplast thylakoid membrane. The enzyme catalyses reduced [plastocyanin] + hnu + oxidized [2Fe-2S]-[ferredoxin] = oxidized [plastocyanin] + reduced [2Fe-2S]-[ferredoxin]. Functionally, psaA and PsaB bind P700, the primary electron donor of photosystem I (PSI), as well as the electron acceptors A0, A1 and FX. PSI is a plastocyanin-ferredoxin oxidoreductase, converting photonic excitation into a charge separation, which transfers an electron from the donor P700 chlorophyll pair to the spectroscopically characterized acceptors A0, A1, FX, FA and FB in turn. Oxidized P700 is reduced on the lumenal side of the thylakoid membrane by plastocyanin. This Oryza nivara (Indian wild rice) protein is Photosystem I P700 chlorophyll a apoprotein A1.